Here is a 504-residue protein sequence, read N- to C-terminus: MFS antiporter QDR2 (504 aa).

Over residues 1–14 (MLSTTQSVTEPTEV) the composition is skewed to polar residues. The disordered stretch occupies residues 1–23 (MLSTTQSVTEPTEVTSKKVEDIE). Over 1 to 41 (MLSTTQSVTEPTEVTSKKVEDIEKENDEETPYSIFTSYDRL) the chain is Cytoplasmic. Residues 42 to 62 (VLIVILSLIGFWSTISSPIYF) form a helical membrane-spanning segment. The Extracellular portion of the chain corresponds to 63–75 (PALPTLTSYFHTS). Residues 76-96 (SSIMNISVVAYLIFQGIAPTI) form a helical membrane-spanning segment. Residues 97-106 (SSNLADTFGR) are Cytoplasmic-facing. The chain crosses the membrane as a helical span at residues 107–129 (RPVILASIIVFCASCVAISQTNV). Topologically, residues 130-132 (YWL) are extracellular. A helical membrane pass occupies residues 133–155 (LAVLRCIQAAGIAAVISISSGVA). Residues 156–169 (GDVCTRANRGSMVG) lie on the Cytoplasmic side of the membrane. A helical membrane pass occupies residues 170–190 (AVAGLQLVGNGIGGLVGAALI). The Extracellular portion of the chain corresponds to 191 to 198 (SSFNSWRS). A helical membrane pass occupies residues 199–219 (IFIFLTIGGGVTFILAIFILP). Residues 220–278 (ETSRKLVGNGSVVPKNILNKSPYIYLPHFKKRMNNDITTIVPATRFDLLGPLKIFFQKN) lie on the Cytoplasmic side of the membrane. Residues 279 to 299 (VFCTLLPVGIHFAAWTMVLTS) traverse the membrane as a helical segment. Residues 300–311 (LSTELESRYHYS) lie on the Extracellular side of the membrane. The helical transmembrane segment at 312 to 332 (VMHVGLIYLPQGIACIAGSLV) threads the bilayer. Residues 333-370 (VGKSLDWYYRYRKTIYDQEVECLPLDERPQFNIVATRL) are Cytoplasmic-facing. Residues 371-391 (TLSVVPALLMIIGLVIFGWCI) traverse the membrane as a helical segment. Residues 392–396 (QYKRH) are Extracellular-facing. A helical membrane pass occupies residues 397-417 (IISIIISTILVSFSASVFIAI). Residues 418–438 (CTTMLVDLYPNNGSGSTSCLN) lie on the Cytoplasmic side of the membrane. A helical membrane pass occupies residues 439–456 (LMRCWLAALGAGVLDSMI). The Extracellular portion of the chain corresponds to 457-460 (NAMN). A helical membrane pass occupies residues 461-483 (VGGTYTVVAGFCILFDLALIYVL). Over 484 to 504 (HNAKKKFSNSGPTTTKSPPKQ) the chain is Cytoplasmic.

The protein belongs to the major facilitator superfamily. CAR1 family.

The protein localises to the cell membrane. Its function is as follows. MFS antiporter that does not display functional linkage as drug transporter and performs functions that significantly affect biofilm development and virulence. No substrate for transport has been identified yet, but plays an important role in the growth in the host. This is MFS antiporter QDR2 (QDR2) from Candida albicans (strain SC5314 / ATCC MYA-2876) (Yeast).